We begin with the raw amino-acid sequence, 248 residues long: Large ribosomal subunit protein uL29m (248 aa).

Disordered stretches follow at residues 77 to 107 (VSKYPLPRPVKPKEQEKRPSNPKHGLWGFFG) and 223 to 248 (AYEPPALDVEEPKGEASDSVKTPPSS).

This sequence belongs to the universal ribosomal protein uL29 family. As to quaternary structure, component of the mitochondrial large ribosomal subunit. Mature mitochondrial ribosomes consist of a small (37S) and a large (54S) subunit. The 37S subunit contains at least 33 different proteins and 1 molecule of RNA (15S). The 54S subunit contains at least 45 different proteins and 1 molecule of RNA (21S).

The protein resides in the mitochondrion. This chain is Large ribosomal subunit protein uL29m (MRPL4), found in Ajellomyces capsulatus (strain NAm1 / WU24) (Darling's disease fungus).